The following is a 586-amino-acid chain: Kelch-like protein 7 (586 aa).

The region spanning cysteine 44–serine 111 is the BTB domain. The BACK domain maps to cysteine 146 to glutamine 248. 6 Kelch repeats span residues arginine 294–asparagine 336, valine 337–glycine 382, lysine 383–glycine 430, leucine 431–aspartate 481, isoleucine 483–serine 528, and isoleucine 530–aspartate 575.

In terms of assembly, homodimer. Component of the BCR(KLHL7) E3 ubiquitin ligase complex, at least composed of CUL3 and KLHL7 and RBX1.

The protein resides in the nucleus. The protein localises to the cytoplasm. The protein operates within protein modification; protein ubiquitination. Functionally, substrate-specific adapter of a BCR (BTB-CUL3-RBX1) E3 ubiquitin ligase complex. The BCR(KLHL7) complex acts by mediating ubiquitination and subsequent degradation of substrate proteins. Probably mediates 'Lys-48'-linked ubiquitination. This chain is Kelch-like protein 7 (Klhl7), found in Rattus norvegicus (Rat).